A 611-amino-acid chain; its full sequence is Leucine aminopeptidase 2 (611 aa).

Residues 135–137 (QCQ) and 265–270 (PYGGME) each bind a peptide. His-294 serves as a coordination point for Zn(2+). Glu-295 acts as the Proton acceptor in catalysis. Positions 298 and 317 each coordinate Zn(2+). Residue Tyr-383 is the Proton donor of the active site.

This sequence belongs to the peptidase M1 family. Requires Zn(2+) as cofactor.

Its subcellular location is the cytoplasm. The protein resides in the nucleus. It catalyses the reaction an epoxide + H2O = an ethanediol. In terms of biological role, aminopeptidase that preferentially cleaves di- and tripeptides. Also has low epoxide hydrolase activity (in vitro). Can hydrolyze the epoxide leukotriene LTA(4) but it forms preferentially 5,6-dihydroxy-7,9,11,14-eicosatetraenoic acid rather than the cytokine leukotriene B(4) as the product compared to the homologous mammalian enzyme (in vitro). This Chaetomium globosum (strain ATCC 6205 / CBS 148.51 / DSM 1962 / NBRC 6347 / NRRL 1970) (Soil fungus) protein is Leucine aminopeptidase 2.